We begin with the raw amino-acid sequence, 133 residues long: Large ribosomal subunit protein bL20 (133 aa).

This sequence belongs to the bacterial ribosomal protein bL20 family.

Functionally, binds directly to 23S ribosomal RNA and is necessary for the in vitro assembly process of the 50S ribosomal subunit. It is not involved in the protein synthesizing functions of that subunit. In Bartonella bacilliformis (strain ATCC 35685 / KC583 / Herrer 020/F12,63), this protein is Large ribosomal subunit protein bL20.